The chain runs to 37 residues: Large ribosomal subunit protein bL36 (37 aa).

This sequence belongs to the bacterial ribosomal protein bL36 family.

In Fusobacterium nucleatum subsp. nucleatum (strain ATCC 25586 / DSM 15643 / BCRC 10681 / CIP 101130 / JCM 8532 / KCTC 2640 / LMG 13131 / VPI 4355), this protein is Large ribosomal subunit protein bL36 (rpmJ).